The chain runs to 342 residues: Manganese-dependent ADP-ribose/CDP-alcohol diphosphatase (342 aa).

Residue M1 is modified to N-acetylmethionine. Zn(2+) contacts are provided by D25, Q27, D74, N110, H241, H278, and H280.

The protein belongs to the ADPRibase-Mn family. Monomer. Mg(2+) serves as cofactor.

It carries out the reaction CDP-choline + H2O = phosphocholine + CMP + 2 H(+). It catalyses the reaction ADP-D-ribose + H2O = D-ribose 5-phosphate + AMP + 2 H(+). The catalysed reaction is CDP-glycerol + H2O = sn-glycerol 3-phosphate + CMP + 2 H(+). Functionally, hydrolyzes ADP-ribose, IDP-ribose, CDP-glycerol, CDP-choline and CDP-ethanolamine, but not other non-reducing ADP-sugars or CDP-glucose. May be involved in immune cell signaling as suggested by the second-messenger role of ADP-ribose, which activates TRPM2 as a mediator of oxidative/nitrosative stress. This chain is Manganese-dependent ADP-ribose/CDP-alcohol diphosphatase (ADPRM), found in Homo sapiens (Human).